Consider the following 1171-residue polypeptide: ATP-dependent helicase/deoxyribonuclease subunit B (1171 aa).

One can recognise a UvrD-like helicase ATP-binding domain in the interval 1 to 390; that stretch reads MSLRFVIGRA…HPLVECIRSA (390 aa). 8–15 serves as a coordination point for ATP; sequence GRAGSGKS. The region spanning 281–587 is the UvrD-like helicase C-terminal domain; that stretch reads MEQPRFHSPA…QFANIPPSLD (307 aa). Residues C805, C1129, C1132, and C1138 each contribute to the [4Fe-4S] cluster site.

The protein belongs to the helicase family. AddB/RexB type 1 subfamily. Heterodimer of AddA and AddB. Mg(2+) is required as a cofactor. It depends on [4Fe-4S] cluster as a cofactor.

Functionally, the heterodimer acts as both an ATP-dependent DNA helicase and an ATP-dependent, dual-direction single-stranded exonuclease. Recognizes the chi site generating a DNA molecule suitable for the initiation of homologous recombination. The AddB subunit has 5' -&gt; 3' nuclease activity but not helicase activity. The polypeptide is ATP-dependent helicase/deoxyribonuclease subunit B (Bacillus cereus (strain ATCC 14579 / DSM 31 / CCUG 7414 / JCM 2152 / NBRC 15305 / NCIMB 9373 / NCTC 2599 / NRRL B-3711)).